The chain runs to 177 residues: Translation initiation factor IF-3 (177 aa).

This sequence belongs to the IF-3 family. Monomer.

It is found in the cytoplasm. IF-3 binds to the 30S ribosomal subunit and shifts the equilibrium between 70S ribosomes and their 50S and 30S subunits in favor of the free subunits, thus enhancing the availability of 30S subunits on which protein synthesis initiation begins. The polypeptide is Translation initiation factor IF-3 (Rhizobium meliloti (strain 1021) (Ensifer meliloti)).